Reading from the N-terminus, the 211-residue chain is DNA dC-&gt;dU-editing enzyme APOBEC-3H (211 aa).

The 123-residue stretch at Leu4 to Leu126 folds into the CMP/dCMP-type deaminase domain. Residue His54 participates in Zn(2+) binding. The Proton donor role is filled by Glu56. Residues Cys85 and Cys88 each coordinate Zn(2+).

The protein belongs to the cytidine and deoxycytidylate deaminase family. Homodimer. Requires Zn(2+) as cofactor.

Its subcellular location is the cytoplasm. The catalysed reaction is a 2'-deoxycytidine in single-stranded DNA + H2O + H(+) = a 2'-deoxyuridine in single-stranded DNA + NH4(+). Its function is as follows. DNA deaminase (cytidine deaminase) which may act as an inhibitor of retrovirus replication and retrotransposon mobility via deaminase-dependent and -independent mechanisms. The polypeptide is DNA dC-&gt;dU-editing enzyme APOBEC-3H (Pongo pygmaeus (Bornean orangutan)).